The sequence spans 75 residues: Dermaseptin-SP5 (75 aa).

The first 22 residues, 1 to 22, serve as a signal peptide directing secretion; it reads MAFLKKSLFLVLFLGLVSLSMC. A propeptide spanning residues 23–45 is cleaved from the precursor; sequence EEEKRENEVEEEQEDDEQSELRR. The tract at residues 26–46 is disordered; that stretch reads KRENEVEEEQEDDEQSELRRS. The span at 30-40 shows a compositional bias: acidic residues; it reads EVEEEQEDDEQ. Proline 72 carries the post-translational modification Proline amide. A propeptide spanning residues 74–75 is cleaved from the precursor; it reads EQ.

Belongs to the frog skin active peptide (FSAP) family. Dermaseptin subfamily. As to expression, expressed by the skin glands.

The protein localises to the secreted. It localises to the target cell membrane. Its function is as follows. Antimicrobial peptide with weak activity against Gram-positive and Gram-negative bacteria and fungi. Has been tested against E.coli (MIC=96.06-256 uM), S.aureus (MIC&gt;192.12 uM), K.pneumoniae (MIC&gt;189.00 uM) and C.albicans (MIC=384.24-1024 uM). Probably acts by disturbing membrane functions with its alpha-helical amphipathic structure. May penetrate bacterial membranes, but stay at the mammalian membrane surface. Does not show hemolytic activity. Does not interact at all with cardiolipin. This chain is Dermaseptin-SP5, found in Agalychnis spurrelli (Gliding leaf frog).